Reading from the N-terminus, the 231-residue chain is Flagellar L-ring protein (231 aa).

An N-terminal signal peptide occupies residues 1–18 (MSRLLIVVSLSSAFALAG). A lipid anchor (N-palmitoyl cysteine) is attached at Cys19. Cys19 carries S-diacylglycerol cysteine lipidation.

Belongs to the FlgH family. In terms of assembly, the basal body constitutes a major portion of the flagellar organelle and consists of four rings (L,P,S, and M) mounted on a central rod.

It localises to the cell outer membrane. Its subcellular location is the bacterial flagellum basal body. In terms of biological role, assembles around the rod to form the L-ring and probably protects the motor/basal body from shearing forces during rotation. This chain is Flagellar L-ring protein, found in Stutzerimonas stutzeri (strain A1501) (Pseudomonas stutzeri).